The following is a 129-amino-acid chain: Lysozyme C (129 aa).

Positions 1 to 129 constitute a C-type lysozyme domain; it reads KVFSKCELAH…LSEYLASCNL (129 aa). 4 disulfides stabilise this stretch: Cys-6-Cys-127, Cys-30-Cys-115, Cys-65-Cys-80, and Cys-76-Cys-94. Active-site residues include Glu-35 and Asp-53. The Ca(2+) site is built by Lys-82, Asp-85, Asn-87, Asp-90, and Asp-91.

This sequence belongs to the glycosyl hydrolase 22 family. As to quaternary structure, monomer. Ca(2+) is required as a cofactor.

It catalyses the reaction Hydrolysis of (1-&gt;4)-beta-linkages between N-acetylmuramic acid and N-acetyl-D-glucosamine residues in a peptidoglycan and between N-acetyl-D-glucosamine residues in chitodextrins.. Functionally, lysozymes have primarily a bacteriolytic function; those in tissues and body fluids are associated with the monocyte-macrophage system and enhance the activity of immunoagents. The sequence is that of Lysozyme C (LYZ) from Equus asinus (Donkey).